The primary structure comprises 406 residues: Elongation factor Tu (406 aa).

Residues 10 to 215 form the tr-type G domain; that stretch reads KPHVNVGTIG…AIDEYIPTPV (206 aa). The G1 stretch occupies residues 19 to 26; it reads GHVDHGKT. Position 19–26 (19–26) interacts with GTP; sequence GHVDHGKT. Residue Thr26 coordinates Mg(2+). The tract at residues 61–65 is G2; the sequence is GITIN. Residues 82 to 85 form a G3 region; sequence DCPG. Residues 82 to 86 and 137 to 140 each bind GTP; these read DCPGH and NKVD. A G4 region spans residues 137–140; the sequence is NKVD. The G5 stretch occupies residues 175 to 177; sequence SAL.

Belongs to the TRAFAC class translation factor GTPase superfamily. Classic translation factor GTPase family. EF-Tu/EF-1A subfamily. Monomer.

Its subcellular location is the cytoplasm. The catalysed reaction is GTP + H2O = GDP + phosphate + H(+). Its function is as follows. GTP hydrolase that promotes the GTP-dependent binding of aminoacyl-tRNA to the A-site of ribosomes during protein biosynthesis. The protein is Elongation factor Tu of Thermus thermophilus (strain ATCC BAA-163 / DSM 7039 / HB27).